A 442-amino-acid chain; its full sequence is D-serine dehydratase (442 aa).

Lysine 118 bears the N6-(pyridoxal phosphate)lysine mark.

Belongs to the serine/threonine dehydratase family. DsdA subfamily. As to quaternary structure, monomer. It depends on pyridoxal 5'-phosphate as a cofactor.

The catalysed reaction is D-serine = pyruvate + NH4(+). This chain is D-serine dehydratase, found in Shigella dysenteriae serotype 1 (strain Sd197).